The following is a 410-amino-acid chain: MDLTGLLLDEEGTFSLAGFQDFTFLPGHQKLSARIRRRLYYGWDWEADCSLEELSSPVADIAVELLQKAAPSPIRRLQKKYVAHVSREACISPCAMMLALVYIERLRHRNPDYLQHVSSSDLFLISMMVASKYLYDEGEEEEVFNDEWGAAGGVAVPTLNALERGFLSAMDWHLYTDPREIFEVLSWLESCVAEQQGRWRGWYTYTDLCVLLEQPTWQLALGSLCQRLVKLSCLLAVAYVSSVALAVASVAVIHQSLGLSCIPTPGPPDLGLTSRCLLEPCIPSVPQCLPSLANVSSCLEGSMGLRSLWGSLLASLTPPPLPPPDPPAPPTLLHNCHLCQKLQRDSPTCHACLHPNRTVPTALSSPWYHTYGLAPPWPWSPVLLSLPQPQQCSLFSVMELARLKSFVFPG.

A helical transmembrane segment spans residues 233–253 (CLLAVAYVSSVALAVASVAVI).

The protein belongs to the CNPPD1 family.

It is found in the membrane. This chain is Protein CNPPD1 (CNPPD1), found in Homo sapiens (Human).